Reading from the N-terminus, the 69-residue chain is Brevinin-1Pb (69 aa).

Residues 1–20 (MFTLNKFLLLLFFLGTINLS) form the signal peptide. A propeptide spanning residues 21-43 (FCEEENAEEERIDEPDETDVEVE) is cleaved from the precursor. A disulfide bridge connects residues C63 and C69.

Expressed by the skin glands.

It localises to the secreted. Its function is as follows. Antibacterial activity against Gram-positive bacterium S.aureus and Gram-negative bacterium E.coli. Has activity against C.albicans. This chain is Brevinin-1Pb, found in Lithobates pipiens (Northern leopard frog).